A 1398-amino-acid polypeptide reads, in one-letter code: DNA-directed RNA polymerase subunit beta' (1398 aa).

Zn(2+) contacts are provided by Cys71, Cys73, Cys86, and Cys89. Mg(2+) contacts are provided by Asp462, Asp464, and Asp466. 4 residues coordinate Zn(2+): Cys810, Cys884, Cys891, and Cys894.

Belongs to the RNA polymerase beta' chain family. The RNAP catalytic core consists of 2 alpha, 1 beta, 1 beta' and 1 omega subunit. When a sigma factor is associated with the core the holoenzyme is formed, which can initiate transcription. Requires Mg(2+) as cofactor. It depends on Zn(2+) as a cofactor.

The catalysed reaction is RNA(n) + a ribonucleoside 5'-triphosphate = RNA(n+1) + diphosphate. Its function is as follows. DNA-dependent RNA polymerase catalyzes the transcription of DNA into RNA using the four ribonucleoside triphosphates as substrates. This Mesorhizobium japonicum (strain LMG 29417 / CECT 9101 / MAFF 303099) (Mesorhizobium loti (strain MAFF 303099)) protein is DNA-directed RNA polymerase subunit beta'.